The chain runs to 396 residues: Tryptophan synthase beta chain (396 aa).

Residue K86 is modified to N6-(pyridoxal phosphate)lysine.

The protein belongs to the TrpB family. As to quaternary structure, tetramer of two alpha and two beta chains. Pyridoxal 5'-phosphate serves as cofactor.

The catalysed reaction is (1S,2R)-1-C-(indol-3-yl)glycerol 3-phosphate + L-serine = D-glyceraldehyde 3-phosphate + L-tryptophan + H2O. Its pathway is amino-acid biosynthesis; L-tryptophan biosynthesis; L-tryptophan from chorismate: step 5/5. Its function is as follows. The beta subunit is responsible for the synthesis of L-tryptophan from indole and L-serine. This is Tryptophan synthase beta chain from Aliivibrio salmonicida (strain LFI1238) (Vibrio salmonicida (strain LFI1238)).